The chain runs to 935 residues: MAPAEILNGREISAQIRARLKNQVTQLKEQVPGFTPGLAILLVGNRDDSNLYINVKLKAAEEIGIKATHIKLPRTTTESEVIKYITSLNEDSTVHGFLVQLPLDSENSINTEEVINAIAPEKDVDGLTSISAGKLARGDLNDCFIPCTPKGCLELIKETGVPIAGRHAVVVGRSKIVGAPMHDLLLWNNATVTTCHSKTANLDEEVNKGDILVVATGRPEMVKGEWIKPGAIVIDCGINYVPDDKKPNGRKVVGDVAYDEAKERASFITPVPGGVGPMTVAMLMQSTVESAKRFLEKFKPGKWMIQYNNLNLKTPDPSDIDISRSCKPKPIGKLAREIGLLSEEVELYGETKAKVLLSALERLKHRPDGKYVVVTGITPTPLGEGKSTTTVGLVQALGAHLYQNVFACVRQPSQGPTFGIKGGAAGGGYSQVIPMEEFNLHLTGDIHAFTAANNLVAAAIDARIFHELTQTDKALFNRLVPSVNGVRKFSDIQIRRLKRLGIEKTDPTTLTDEEINRFARLDIDPETITWQRVLDTNDRFLRKITIGQAPTEKGHTRTAQFDISVASEIMAALALTTSLEDMRERLGKMVVASSKKGEPVSAEDLGVSGALTVLMKDAIKPNLMQTLEGTPVFVHAGPFANIAHGNSSIIADRIALKLVGPEGFVVTEAGFGADIGMEKFFNIKCRYSGLCPHVVVLVATVRALKMHGGGPTVTAGLPLPKAYIEENLELVEKGFSNLKKQIENARMFGIPVVVAVNAFKTDTEAELDLISRLSREHGAFDAVKCTHWAEGGNGALALAQAVQRAAQAPSSFQLLYDLKLPVEDKIRIIAQKIYGADDIELLPEAQHKAEVYTKQGFGNLPVCMAKTHLSLSHNPEQKGVPTGFILPIRDIRASVGAGFLYPLVGTMSTMPGLPTRPCFYDIDLDPETQQVNGLF.

An N-acetylmethionine modification is found at Met-1. The segment at 2 to 291 (APAEILNGRE…MLMQSTVESA (290 aa)) is methylenetetrahydrofolate dehydrogenase and methenyltetrahydrofolate cyclohydrolase (D/C) domain. Substrate is bound by residues 52-56 (YINVK) and 99-101 (VQL). Lys-56 is an active-site residue. NADP(+) is bound by residues 172-174 (GRS) and Ser-197. Residue 272 to 276 (PGGVG) participates in substrate binding. The interval 310-935 (LNLKTPDPSD…PETQQVNGLF (626 aa)) is formyltetrahydrofolate synthetase domain. A Phosphoserine modification is found at Ser-318. 380-387 (TPLGEGKS) provides a ligand contact to ATP. Phosphoserine occurs at positions 413 and 490.

The protein in the N-terminal section; belongs to the tetrahydrofolate dehydrogenase/cyclohydrolase family. In the C-terminal section; belongs to the formate--tetrahydrofolate ligase family. In terms of assembly, homodimer.

The protein localises to the cytoplasm. It catalyses the reaction (6R)-5,10-methylene-5,6,7,8-tetrahydrofolate + NADP(+) = (6R)-5,10-methenyltetrahydrofolate + NADPH. The catalysed reaction is (6R)-5,10-methenyltetrahydrofolate + H2O = (6R)-10-formyltetrahydrofolate + H(+). It carries out the reaction (6S)-5,6,7,8-tetrahydrofolate + formate + ATP = (6R)-10-formyltetrahydrofolate + ADP + phosphate. It functions in the pathway one-carbon metabolism; tetrahydrofolate interconversion. In terms of biological role, trifunctional enzyme that catalyzes the interconversion of three forms of one-carbon-substituted tetrahydrofolate: (6R)-5,10-methylene-5,6,7,8-tetrahydrofolate, 5,10-methenyltetrahydrofolate and (6S)-10-formyltetrahydrofolate. These derivatives of tetrahydrofolate are differentially required in nucleotide and amino acid biosynthesis, (6S)-10-formyltetrahydrofolate being required for purine biosynthesis while (6R)-5,10-methylene-5,6,7,8-tetrahydrofolate is used for serine and methionine biosynthesis for instance. The polypeptide is C-1-tetrahydrofolate synthase, cytoplasmic (MTHFD1) (Pongo abelii (Sumatran orangutan)).